The sequence spans 124 residues: MKFSLIAAVALLALAQGSFAQDAADLEKITQYFENLKNKMTEDVTAFLTNQDVANQAQTFMQERKTQLEPLATQIQEQLRAAATKFEEHITPLAANVQPVVENFQQQMEALVQKLMEKTRSISN.

Positions 1–20 (MKFSLIAAVALLALAQGSFA) are cleaved as a signal peptide. Residue glutamine 21 is modified to Pyrrolidone carboxylic acid.

The protein belongs to the apolipoprotein A1/A4/E family.

The protein localises to the secreted. Antifreeze proteins lower the blood freezing point. This is Type-4 ice-structuring protein from Paralichthys olivaceus (Bastard halibut).